We begin with the raw amino-acid sequence, 64 residues long: Translational regulator CsrA (64 aa).

The protein belongs to the CsrA/RsmA family. Homodimer; the beta-strands of each monomer intercalate to form a hydrophobic core, while the alpha-helices form wings that extend away from the core.

It is found in the cytoplasm. In terms of biological role, a key translational regulator that binds mRNA to regulate translation initiation and/or mRNA stability. Mediates global changes in gene expression, shifting from rapid growth to stress survival by linking envelope stress, the stringent response and the catabolite repression systems. Usually binds in the 5'-UTR; binding at or near the Shine-Dalgarno sequence prevents ribosome-binding, repressing translation, binding elsewhere in the 5'-UTR can activate translation and/or stabilize the mRNA. Its function is antagonized by small RNA(s). The chain is Translational regulator CsrA from Methylococcus capsulatus (strain ATCC 33009 / NCIMB 11132 / Bath).